We begin with the raw amino-acid sequence, 186 residues long: MLILLDQNGVLADFEHAFIDAWRKRHPDIEPVAFEDRKSFHIREDYAPELRGLAEAIYTAPGFIRDLPPVPGAIEAFRELLALGMDVRICSSPLMQFENYVAEKYLWVERHLGREATQRLILTRDKTLVQGDLLIDDRPVITGAARPRWRHIIYDAPYNRDQTDRPRLDWRNWRNVLAGELYRSDA.

It belongs to the 5'(3')-deoxyribonucleotidase family. Requires Mg(2+) as cofactor.

Dephosphorylates the 5' and 2'(3')-phosphates of deoxyribonucleotides. This chain is Putative 5'(3')-deoxyribonucleotidase, found in Bordetella parapertussis (strain 12822 / ATCC BAA-587 / NCTC 13253).